The primary structure comprises 495 residues: ATP synthase subunit beta, chloroplastic (495 aa).

ATP is bound at residue 172 to 179 (GGAGVGKT).

This sequence belongs to the ATPase alpha/beta chains family. In terms of assembly, F-type ATPases have 2 components, CF(1) - the catalytic core - and CF(0) - the membrane proton channel. CF(1) has five subunits: alpha(3), beta(3), gamma(1), delta(1), epsilon(1). CF(0) has four main subunits: a(1), b(1), b'(1) and c(9-12).

The protein resides in the plastid. It localises to the chloroplast thylakoid membrane. The enzyme catalyses ATP + H2O + 4 H(+)(in) = ADP + phosphate + 5 H(+)(out). Produces ATP from ADP in the presence of a proton gradient across the membrane. The catalytic sites are hosted primarily by the beta subunits. The polypeptide is ATP synthase subunit beta, chloroplastic (Barnardia japonica (Chinese squill)).